The following is a 450-amino-acid chain: Glucose-6-phosphate isomerase (450 aa).

Catalysis depends on E291, which acts as the Proton donor. Residues H312 and K426 contribute to the active site.

The protein belongs to the GPI family.

It localises to the cytoplasm. The enzyme catalyses alpha-D-glucose 6-phosphate = beta-D-fructose 6-phosphate. Its pathway is carbohydrate biosynthesis; gluconeogenesis. The protein operates within carbohydrate degradation; glycolysis; D-glyceraldehyde 3-phosphate and glycerone phosphate from D-glucose: step 2/4. Functionally, catalyzes the reversible isomerization of glucose-6-phosphate to fructose-6-phosphate. This is Glucose-6-phosphate isomerase from Clostridium perfringens (strain SM101 / Type A).